The primary structure comprises 332 residues: Thiamine thiazole synthase (332 aa).

Residues C87, E108–A109, G116, and V184 contribute to the substrate site. 2,3-didehydroalanine (Cys) is present on C221. Residues D223, H238, M290, and R300 to G302 each bind substrate.

Belongs to the THI4 family. In terms of assembly, homooctamer. Fe cation serves as cofactor. During the catalytic reaction, a sulfide is transferred from Cys-221 to a reaction intermediate, generating a dehydroalanine residue.

Its subcellular location is the cytoplasm. The protein localises to the nucleus. It catalyses the reaction [ADP-thiazole synthase]-L-cysteine + glycine + NAD(+) = [ADP-thiazole synthase]-dehydroalanine + ADP-5-ethyl-4-methylthiazole-2-carboxylate + nicotinamide + 3 H2O + 2 H(+). Involved in biosynthesis of the thiamine precursor thiazole. Catalyzes the conversion of NAD and glycine to adenosine diphosphate 5-(2-hydroxyethyl)-4-methylthiazole-2-carboxylic acid (ADT), an adenylated thiazole intermediate. The reaction includes an iron-dependent sulfide transfer from a conserved cysteine residue of the protein to a thiazole intermediate. The enzyme can only undergo a single turnover, which suggests it is a suicide enzyme. May have additional roles in adaptation to various stress conditions and in DNA damage tolerance. The sequence is that of Thiamine thiazole synthase from Aspergillus fumigatus (strain ATCC MYA-4609 / CBS 101355 / FGSC A1100 / Af293) (Neosartorya fumigata).